The primary structure comprises 256 residues: Deoxyribose-phosphate aldolase (256 aa).

The active-site Proton donor/acceptor is the aspartate 102. The active-site Schiff-base intermediate with acetaldehyde is lysine 165. The active-site Proton donor/acceptor is lysine 197.

The protein belongs to the DeoC/FbaB aldolase family. DeoC type 2 subfamily.

The protein localises to the cytoplasm. The catalysed reaction is 2-deoxy-D-ribose 5-phosphate = D-glyceraldehyde 3-phosphate + acetaldehyde. The protein operates within carbohydrate degradation; 2-deoxy-D-ribose 1-phosphate degradation; D-glyceraldehyde 3-phosphate and acetaldehyde from 2-deoxy-alpha-D-ribose 1-phosphate: step 2/2. Functionally, catalyzes a reversible aldol reaction between acetaldehyde and D-glyceraldehyde 3-phosphate to generate 2-deoxy-D-ribose 5-phosphate. The polypeptide is Deoxyribose-phosphate aldolase (Shewanella sp. (strain MR-7)).